The primary structure comprises 296 residues: Acetylglutamate kinase (296 aa).

Residues Gly67–Gly68, Arg89, and Asn194 contribute to the substrate site.

This sequence belongs to the acetylglutamate kinase family. ArgB subfamily.

Its subcellular location is the cytoplasm. It carries out the reaction N-acetyl-L-glutamate + ATP = N-acetyl-L-glutamyl 5-phosphate + ADP. It participates in amino-acid biosynthesis; L-arginine biosynthesis; N(2)-acetyl-L-ornithine from L-glutamate: step 2/4. In terms of biological role, catalyzes the ATP-dependent phosphorylation of N-acetyl-L-glutamate. This Brucella canis (strain ATCC 23365 / NCTC 10854 / RM-666) protein is Acetylglutamate kinase.